Consider the following 490-residue polypeptide: Lipoprotein lipase (490 aa).

An N-terminal signal peptide occupies residues 1 to 25 (MERGRGMGKTALLAVLCLCLRGAAG). Residues 32–53 (MNFEGIESKFSLRTPAEPDEDV) form an interaction with GPIHBP1 region. A disulfide bond links cysteine 54 and cysteine 67. N-linked (GlcNAc...) (complex) asparagine glycosylation occurs at asparagine 70. Tyrosine 121 is modified (3'-nitrotyrosine). Catalysis depends on serine 159, which acts as the Nucleophile. The active-site Charge relay system is the aspartate 183. At tyrosine 191 the chain carries 3'-nitrotyrosine. Residues alanine 194, arginine 197, serine 199, and aspartate 202 each contribute to the Ca(2+) site. A disulfide bridge links cysteine 243 with cysteine 266. Positions 243-266 (CNLGEALRLIAEKGFSDVDQLVKC) are essential for determining substrate specificity. Histidine 268 serves as the catalytic Charge relay system. Intrachain disulfides connect cysteine 291-cysteine 310 and cysteine 302-cysteine 305. Residues 341 to 464 (FHYQVKIHFF…KGEEAAIFVK (124 aa)) enclose the PLAT domain. A 3'-nitrotyrosine modification is found at tyrosine 343. Residues asparagine 354 and asparagine 386 are each glycosylated (N-linked (GlcNAc...) asparagine). The tract at residues 417 to 421 (WSDWW) is important for interaction with lipoprotein particles. Residues 430-434 (RVRVK) form an important for heparin binding region. Residue 430–441 (RVRVKSGETQKK) participates in heparin binding. The interval 443-467 (VFCSRDGSSRLGKGEEAAIFVKCLE) is interaction with GPIHBP1. The cysteines at positions 445 and 465 are disulfide-linked. A disordered region spans residues 471-490 (SRKRGGAKKASKENSAHESA). Residues 480–490 (ASKENSAHESA) show a composition bias toward basic and acidic residues.

This sequence belongs to the AB hydrolase superfamily. Lipase family. Homodimer. Interacts with GPIHBP1 with 1:1 stoichiometry. Interacts with APOC2; the interaction activates LPL activity in the presence of lipids. Interaction with heparan sulfate proteoglycans is required to protect LPL against loss of activity. Associates with lipoprotein particles in blood plasma. Interacts with LMF1 and SEL1L; interaction with SEL1L is required to prevent aggregation of newly synthesized LPL in the endoplasmic reticulum (ER), and for normal export of LPL from the ER to the extracellular space. N-glycan at Asn-70 is a triantennary complex oligosaccharide containing sialic acid, galactose, mannose, and N-acetylglucosamine, the reducing GlcNAc being sulfated at C6. In terms of processing, tyrosine nitration after lipopolysaccharide (LPS) challenge down-regulates the lipase activity.

The protein localises to the cell membrane. The protein resides in the secreted. It is found in the extracellular space. Its subcellular location is the extracellular matrix. It carries out the reaction a triacylglycerol + H2O = a diacylglycerol + a fatty acid + H(+). The catalysed reaction is a 1,2-diacyl-sn-glycero-3-phosphocholine + H2O = a 2-acyl-sn-glycero-3-phosphocholine + a fatty acid + H(+). The enzyme catalyses 1,2,3-tri-(9Z-octadecenoyl)-glycerol + H2O = di-(9Z)-octadecenoylglycerol + (9Z)-octadecenoate + H(+). It catalyses the reaction 1,2-di-(9Z-octadecenoyl)-sn-glycero-3-phosphocholine + H2O = (9Z-octadecenoyl)-sn-glycero-3-phosphocholine + (9Z)-octadecenoate + H(+). It carries out the reaction 1,2,3-tributanoylglycerol + H2O = dibutanoylglycerol + butanoate + H(+). The catalysed reaction is 1,2-dihexadecanoyl-sn-glycero-3-phosphocholine + H2O = hexadecanoyl-sn-glycero-3-phosphocholine + hexadecanoate + H(+). With respect to regulation, ca(2+) binding promotes protein stability and formation of the active homodimer. Key enzyme in triglyceride metabolism. Catalyzes the hydrolysis of triglycerides from circulating chylomicrons and very low density lipoproteins (VLDL), and thereby plays an important role in lipid clearance from the blood stream, lipid utilization and storage. Although it has both phospholipase and triglyceride lipase activities it is primarily a triglyceride lipase with low but detectable phospholipase activity. Mediates margination of triglyceride-rich lipoprotein particles in capillaries. Recruited to its site of action on the luminal surface of vascular endothelium by binding to GPIHBP1 and cell surface heparan sulfate proteoglycans. This Gallus gallus (Chicken) protein is Lipoprotein lipase (LPL).